We begin with the raw amino-acid sequence, 244 residues long: Type III pantothenate kinase (244 aa).

An ATP-binding site is contributed by 8–15 (DQGNSACK). Substrate contacts are provided by residues tyrosine 88 and 94–97 (GADR). The Proton acceptor role is filled by aspartate 96. Aspartate 117 contacts K(+). Threonine 120 lines the ATP pocket. Threonine 175 serves as a coordination point for substrate.

It belongs to the type III pantothenate kinase family. In terms of assembly, homodimer. NH4(+) is required as a cofactor. Requires K(+) as cofactor.

Its subcellular location is the cytoplasm. It carries out the reaction (R)-pantothenate + ATP = (R)-4'-phosphopantothenate + ADP + H(+). It participates in cofactor biosynthesis; coenzyme A biosynthesis; CoA from (R)-pantothenate: step 1/5. In terms of biological role, catalyzes the phosphorylation of pantothenate (Pan), the first step in CoA biosynthesis. This is Type III pantothenate kinase from Porphyromonas gingivalis (strain ATCC BAA-308 / W83).